A 481-amino-acid polypeptide reads, in one-letter code: O-acetyltransferase andG (481 aa).

It belongs to the fumigaclavine B O-acetyltransferase family. As to quaternary structure, monomer.

The protein operates within secondary metabolite biosynthesis; terpenoid biosynthesis. In terms of biological role, O-acetyltransferase; part of the gene cluster that mediates the biosynthesis of anditomin, a fungal meroterpenoid. The first step of the pathway is the synthesis of 3,5-dimethylorsellinic acid (DMOA) by the polyketide synthase andM. DMOA is then converted to the phthalide compound 5,7-dihydroxy-4,6-dimethylphthalide (DHDMP) by the cytochrome P450 monooxygenase andK, which is further prenylated by the prenyltransferase andD to yield farnesyl-DHDMP. Further epoxidation by the FAD-dependent monooxygenase andE leads to epoxyfarnesyl-DHDMP. The next step involves the terpene cyclase andB that converts epoxyfarnesyl-DHDMP into preandiloid A through opening of the epoxide ring followed by the cyclization of the farnesyl moiety. Preandiloid A is in turn oxidized at the C-3 hydroxyl group to yield preandiloid B by the dehydrogenase andC. The dioxygenase andA is solely responsible for the dehydrogenation of preandiloid B leading to the enone preandiloid C, as well as for the intriguing structural rearrangement to generate the bicyclo[2.2.2]octane core, transforming preandiloid C into andiconin. FAD-binding monooxygenase andJ then produces andilesin D which is reduced by dehydrogenase andI to yield andilesin A. Action of acetyltransferase andG followed by a spontaneous acetate elimination leads then to andilesin B, which is in turn substrate of the short chain dehydrogenase andH to yield andilesin C. Finally, the dioxygenase andF catalyzes the transformation of andilesin C to anditomin. In Emericella variicolor (Aspergillus stellatus), this protein is O-acetyltransferase andG.